The chain runs to 1011 residues: Beta-galactosidase A (1011 aa).

An N-terminal signal peptide occupies residues 1 to 19 (MKLLSSWVVAALAAQAAGA). Residues Tyr96, 140-142 (NAE), and Asn199 contribute to the substrate site. The Proton donor role is filled by Glu200. Cystine bridges form between Cys205–Cys206 and Cys267–Cys316. The Nucleophile role is filled by Glu299. Tyr365 lines the substrate pocket. Residues Asn374, Asn456, Asn625, Asn707, Asn763, Asn780, and Asn917 are each glycosylated (N-linked (GlcNAc...) asparagine).

Belongs to the glycosyl hydrolase 35 family. In terms of assembly, monomer.

The protein resides in the secreted. The catalysed reaction is Hydrolysis of terminal non-reducing beta-D-galactose residues in beta-D-galactosides.. Cleaves beta-linked terminal galactosyl residues from gangliosides, glycoproteins, and glycosaminoglycans. Has high in vitro transglycosylation activity with p-nitrophenyl-beta-D-galactopyranoside, methyl-beta-D-galactopyranoside or lactose as a donor and galactose as an acceptor. The chain is Beta-galactosidase A (lacA) from Penicillium sp.